The primary structure comprises 261 residues: Adenosylcobinamide-GDP ribazoletransferase (261 aa).

Helical transmembrane passes span 9 to 29 (LELFLLAVSFFSRIPVPVSLP), 41 to 61 (YFALVGLLLGAICALVYSLAT), 64 to 84 (FSTNISVFLTMVLSLLLTGAF), 114 to 134 (IGTYGSSALIMVLLGKYLLLT), 141 to 161 (SLVPVWLLAYTLSRAVAASLI), 196 to 216 (ATLLYFSWQFIGVMIAASLIF), and 235 to 255 (CLGAAQQLMEILIYLILLAFL).

Belongs to the CobS family. Requires Mg(2+) as cofactor.

It is found in the cell inner membrane. The catalysed reaction is alpha-ribazole + adenosylcob(III)inamide-GDP = adenosylcob(III)alamin + GMP + H(+). It carries out the reaction alpha-ribazole 5'-phosphate + adenosylcob(III)inamide-GDP = adenosylcob(III)alamin 5'-phosphate + GMP + H(+). It participates in cofactor biosynthesis; adenosylcobalamin biosynthesis; adenosylcobalamin from cob(II)yrinate a,c-diamide: step 7/7. Joins adenosylcobinamide-GDP and alpha-ribazole to generate adenosylcobalamin (Ado-cobalamin). Also synthesizes adenosylcobalamin 5'-phosphate from adenosylcobinamide-GDP and alpha-ribazole 5'-phosphate. This chain is Adenosylcobinamide-GDP ribazoletransferase, found in Vibrio cholerae serotype O1 (strain ATCC 39541 / Classical Ogawa 395 / O395).